The chain runs to 113 residues: MAQSPAAASPGAPEQGCPIRVEHDRRRRQFTVRLNGCHDRAVLLYEYVGKRIVDLQHTEVPDAYRGRGIAKHLAKAALDFVVEEDLRAHVTCWYIQKFVKENPLPQYLERLQP.

Positions 1–16 (MAQSPAAASPGAPEQG) are enriched in low complexity. The tract at residues 1 to 20 (MAQSPAAASPGAPEQGCPIR) is disordered. An N-acetyltransferase domain is found at 22–112 (EHDRRRRQFT…PLPQYLERLQ (91 aa)).

This sequence belongs to the NATD1 family.

The chain is Protein NATD1 (NATD1) from Bos taurus (Bovine).